Here is a 318-residue protein sequence, read N- to C-terminus: Thiohydrolase aneE (318 aa).

This sequence belongs to the polyketide transferase af380 family.

The enzyme catalyses aculene D + L-prolyl-[peptidyl-carrier protein] = aculene B + holo-[peptidyl-carrier protein]. It catalyses the reaction aculene C + L-prolyl-[peptidyl-carrier protein] = aculene A + holo-[peptidyl-carrier protein]. It participates in secondary metabolite biosynthesis. Its function is as follows. Thiohydrolase; part of the gene cluster that mediates the biosynthesis of aculenes, a unique type of norsesquiterpenes that contain a nordaucane skeleton linked to an L-proline moiety and are of mixed biosynthetic origin. The pathway begins with the synthesis of dauca-4,7-diene by the terpene cyclase aneC using farnesyl pyrophosphate (FPP) as substrate. The cytochrome P450 monooxygenase aneF then performs the initial oxidation at C-12 of dauca-4,7-diene to yield asperaculane D. Asperaculane D is substrate of the cytochrome P450 monooxygenase aneD for C-10 hydroxylation to yield asperaculane E. The cytochrome P450 monooxygenase aneG then converts asperaculane E into aculene D via C-2 oxidation. The monomodular nonribosomal peptide synthtase aneB adenylates L-proline and the thiohydrolase aneE transfers this activated L-proline derivative to aculenes D and C to produce respectively aculenes B and A. The dioxygenase aneA converts aculene D into aculene C, and aculene B into aculene A by introducing the 5,6-alkene moiety. Asperculanes A, B, C and F, as well as 14-prolyl asperculane C, might be shunt products of the pathway. This chain is Thiohydrolase aneE, found in Aspergillus aculeatus (strain ATCC 16872 / CBS 172.66 / WB 5094).